Reading from the N-terminus, the 428-residue chain is Glutamate-1-semialdehyde 2,1-aminomutase (428 aa).

Lysine 265 bears the N6-(pyridoxal phosphate)lysine mark.

This sequence belongs to the class-III pyridoxal-phosphate-dependent aminotransferase family. HemL subfamily. As to quaternary structure, homodimer. Requires pyridoxal 5'-phosphate as cofactor.

The protein localises to the cytoplasm. The catalysed reaction is (S)-4-amino-5-oxopentanoate = 5-aminolevulinate. Its pathway is porphyrin-containing compound metabolism; protoporphyrin-IX biosynthesis; 5-aminolevulinate from L-glutamyl-tRNA(Glu): step 2/2. This is Glutamate-1-semialdehyde 2,1-aminomutase from Shewanella woodyi (strain ATCC 51908 / MS32).